A 301-amino-acid polypeptide reads, in one-letter code: tRNA dimethylallyltransferase (301 aa).

ATP is bound at residue 2 to 9; sequence GPTASGKT. 4–9 contributes to the substrate binding site; the sequence is TASGKT. Interaction with substrate tRNA regions lie at residues 27 to 30 and 151 to 155; these read DSAM and QRIQR.

It belongs to the IPP transferase family. In terms of assembly, monomer. Mg(2+) is required as a cofactor.

The catalysed reaction is adenosine(37) in tRNA + dimethylallyl diphosphate = N(6)-dimethylallyladenosine(37) in tRNA + diphosphate. In terms of biological role, catalyzes the transfer of a dimethylallyl group onto the adenine at position 37 in tRNAs that read codons beginning with uridine, leading to the formation of N6-(dimethylallyl)adenosine (i(6)A). This Coxiella burnetii (strain CbuK_Q154) (Coxiella burnetii (strain Q154)) protein is tRNA dimethylallyltransferase.